We begin with the raw amino-acid sequence, 416 residues long: CinA-like protein (416 aa).

It belongs to the CinA family.

This Rippkaea orientalis (strain PCC 8801 / RF-1) (Cyanothece sp. (strain PCC 8801)) protein is CinA-like protein.